The chain runs to 126 residues: Topoisomerase I damage affected protein 8 (126 aa).

Positions 1 to 110 (MTGYFLPPQT…VTTVSDDFAG (110 aa)) constitute a PA14 domain.

The protein belongs to the flocculin family.

This chain is Topoisomerase I damage affected protein 8 (TDA8), found in Saccharomyces cerevisiae (strain ATCC 204508 / S288c) (Baker's yeast).